A 184-amino-acid chain; its full sequence is Chromobox protein homolog hpl-1 (184 aa).

The span at 1-13 shows a compositional bias: polar residues; the sequence is MSRQNPVRSTRGN. Disordered regions lie at residues 1-27 and 87-115; these read MSRQ…QDAP and AAKR…STSD. A Chromo domain is found at 37–95; sequence FVVEKVLNKRLTRGGSEYYIKWQGFPESECSWEPIENLQCDRMIQEYEKEAAKRTTRKR. A compositionally biased stretch (polar residues) spans 99–115; it reads PQPSTSSSAELQPSTSD.

In terms of assembly, interacts with histone demethylase spr-5. Interacts with chromobox protein homolog hpl-2. Interacts with histone H3 tails methylated at 'Lys-9' (H3K9me3) and 'Lys-23'(H3K23me2). Interacts with histone H1 variant his-24 (when monomethylated at 'Lys-14'); the interaction is direct. May interact with the REST corepressor rcor-1, histone deacetylase hda-1, and the histone demethylase lsd-1.

The protein localises to the nucleus. Its function is as follows. Seems to be involved in transcriptional silencing in heterochromatin-like complexes. Involved in epigenetic repression. Probably does not act as global transcriptional repressor. Plays a role in linking epigenetic regulation with the innate immune response. Acting in concert with chromobox protein homolog hpl-2 and histone H1 protein his-24, involved in reproduction, somatic gonad development, male tail development and vulval cell fate decisions; perhaps as a result of modulating expression of Hox genes mab-5 and egl-5. Role in growth and somatic gonad development is antagonized by histone-lysine N-methyltransferase set-2/SET1. Required for larval development, acting redundantly with hpl-2. Plays a role in the formation of the vulva and in fertility, acting together with a CoREST-like complex, and hpl-2. This is Chromobox protein homolog hpl-1 from Caenorhabditis elegans.